Consider the following 216-residue polypeptide: Probable GTP-binding protein EngB (216 aa).

In terms of domain architecture, EngB-type G spans 23–197 (EGAEIAFAGR…EHKVAGWLGL (175 aa)). Residues 31-38 (GRSNAGKS), 58-62 (GRTQL), 76-79 (DLPG), 143-146 (TKCD), and 176-178 (FSS) each bind GTP. 2 residues coordinate Mg(2+): Ser38 and Thr60.

It belongs to the TRAFAC class TrmE-Era-EngA-EngB-Septin-like GTPase superfamily. EngB GTPase family. Requires Mg(2+) as cofactor.

Its function is as follows. Necessary for normal cell division and for the maintenance of normal septation. This is Probable GTP-binding protein EngB from Aromatoleum aromaticum (strain DSM 19018 / LMG 30748 / EbN1) (Azoarcus sp. (strain EbN1)).